The primary structure comprises 78 residues: Large ribosomal subunit protein bL28 (78 aa).

The protein belongs to the bacterial ribosomal protein bL28 family.

The sequence is that of Large ribosomal subunit protein bL28 from Azoarcus sp. (strain BH72).